We begin with the raw amino-acid sequence, 147 residues long: MKVILQKDVKDVGRVGELVNVSEGFARNFLFPRKLAAEATEKRVKEYEHLQRVAEAKKKKALAERQELLNKINGTTVTFKLAAGDTDKLFGTVTTTDISKELQKMGHSIDRRDIHLEEPIKVLGQHKAVVRYAEGMEAKIQIAVERA.

The protein belongs to the bacterial ribosomal protein bL9 family.

Binds to the 23S rRNA. This chain is Large ribosomal subunit protein bL9, found in Bdellovibrio bacteriovorus (strain ATCC 15356 / DSM 50701 / NCIMB 9529 / HD100).